The following is a 333-amino-acid chain: MTRILDNDLIGDEGSVERTLRPQYLREYIGQDRVKDQLMIFIEAAKRREESLDHVLLFGPPGLGKTTMAFVIANELGVHLKQTSGPAIEKAGDLVAILNDLEPGDVLFIDEIHRMPMTVEEILYSAMEDFYIDIMIGAGDTSRSVHLELPPFTLIGATTRAGMLSNPLRARFGITGHMEYYQTADLTEIVERTADIFDMTIKHEAAYELARRSRGTPRIANRLLKRVRDYAQIMGDGMITTQITDKALTMLDVDQEGLDYVDQKILRTMIEVYQGGPVGLGTLSVNIAEERDTVEDMYEPYLIQKGFIMRTRTGRVVTEKAYQHLGYPYEKKH.

The large ATPase domain (RuvB-L) stretch occupies residues 1–181 (MTRILDNDLI…FGITGHMEYY (181 aa)). ATP contacts are provided by residues L20, R21, G62, K65, T66, T67, 128-130 (EDF), R171, Y181, and R218. Residue T66 coordinates Mg(2+). The small ATPAse domain (RuvB-S) stretch occupies residues 182–252 (QTADLTEIVE…ITDKALTMLD (71 aa)). The tract at residues 255 to 333 (QEGLDYVDQK…HLGYPYEKKH (79 aa)) is head domain (RuvB-H). Residues R291, R310, R312, and R315 each contribute to the DNA site.

It belongs to the RuvB family. Homohexamer. Forms an RuvA(8)-RuvB(12)-Holliday junction (HJ) complex. HJ DNA is sandwiched between 2 RuvA tetramers; dsDNA enters through RuvA and exits via RuvB. An RuvB hexamer assembles on each DNA strand where it exits the tetramer. Each RuvB hexamer is contacted by two RuvA subunits (via domain III) on 2 adjacent RuvB subunits; this complex drives branch migration. In the full resolvosome a probable DNA-RuvA(4)-RuvB(12)-RuvC(2) complex forms which resolves the HJ.

Its subcellular location is the cytoplasm. The catalysed reaction is ATP + H2O = ADP + phosphate + H(+). Its function is as follows. The RuvA-RuvB-RuvC complex processes Holliday junction (HJ) DNA during genetic recombination and DNA repair, while the RuvA-RuvB complex plays an important role in the rescue of blocked DNA replication forks via replication fork reversal (RFR). RuvA specifically binds to HJ cruciform DNA, conferring on it an open structure. The RuvB hexamer acts as an ATP-dependent pump, pulling dsDNA into and through the RuvAB complex. RuvB forms 2 homohexamers on either side of HJ DNA bound by 1 or 2 RuvA tetramers; 4 subunits per hexamer contact DNA at a time. Coordinated motions by a converter formed by DNA-disengaged RuvB subunits stimulates ATP hydrolysis and nucleotide exchange. Immobilization of the converter enables RuvB to convert the ATP-contained energy into a lever motion, pulling 2 nucleotides of DNA out of the RuvA tetramer per ATP hydrolyzed, thus driving DNA branch migration. The RuvB motors rotate together with the DNA substrate, which together with the progressing nucleotide cycle form the mechanistic basis for DNA recombination by continuous HJ branch migration. Branch migration allows RuvC to scan DNA until it finds its consensus sequence, where it cleaves and resolves cruciform DNA. The sequence is that of Holliday junction branch migration complex subunit RuvB from Streptococcus equi subsp. zooepidemicus (strain MGCS10565).